The following is a 479-amino-acid chain: Endo-beta-1,6-galactanase (479 aa).

Positions 1–20 are cleaved as a signal peptide; that stretch reads MRSIVLPSLALALFSQRARA. An N-linked (GlcNAc...) asparagine glycan is attached at Asn89. Glu210 serves as the catalytic Proton donor. A glycan (N-linked (GlcNAc...) asparagine) is linked at Asn271. Glu311 serves as the catalytic Nucleophile. Asn358 carries an N-linked (GlcNAc...) asparagine glycan.

The enzyme catalyses Endohydrolysis of (1-&gt;6)-beta-D-galactosidic linkages in arabinogalactan proteins and (1-&gt;3):(1-&gt;6)-beta-galactans to yield galactose and beta-(1-&gt;6)-galactaobiose as the final products.. Hydrolyzes galactooligomers with a degree of polymerization higher than 3. Hydrolyzes radish root arabinogalactan-protein. Does not hydrolyze dextran, arabinan, starch, laminarin, beta-1,4- and beta-1,3-galactans, larch wood arabinogalactan or acid-insoluble polygalacturonic acid. The chain is Endo-beta-1,6-galactanase from Hypocrea rufa (Trichoderma viride).